The primary structure comprises 386 residues: Cobalt-precorrin-5B C(1)-methyltransferase (386 aa).

It belongs to the CbiD family.

It catalyses the reaction Co-precorrin-5B + S-adenosyl-L-methionine = Co-precorrin-6A + S-adenosyl-L-homocysteine. Its pathway is cofactor biosynthesis; adenosylcobalamin biosynthesis; cob(II)yrinate a,c-diamide from sirohydrochlorin (anaerobic route): step 6/10. Catalyzes the methylation of C-1 in cobalt-precorrin-5B to form cobalt-precorrin-6A. This Prochlorococcus marinus (strain MIT 9303) protein is Cobalt-precorrin-5B C(1)-methyltransferase.